The chain runs to 393 residues: Acetate kinase (393 aa).

N8 lines the Mg(2+) pocket. K15 contacts ATP. A substrate-binding site is contributed by R91. The active-site Proton donor/acceptor is the D148. ATP contacts are provided by residues H206–G210, D280–R282, and G325–N329. A Mg(2+)-binding site is contributed by E376.

This sequence belongs to the acetokinase family. As to quaternary structure, homodimer. Requires Mg(2+) as cofactor. It depends on Mn(2+) as a cofactor.

It localises to the cytoplasm. It catalyses the reaction acetate + ATP = acetyl phosphate + ADP. It participates in metabolic intermediate biosynthesis; acetyl-CoA biosynthesis; acetyl-CoA from acetate: step 1/2. In terms of biological role, catalyzes the formation of acetyl phosphate from acetate and ATP. Can also catalyze the reverse reaction. The protein is Acetate kinase of Rhizobium meliloti (Ensifer meliloti).